The sequence spans 226 residues: Deoxyribose-phosphate aldolase (226 aa).

The active-site Proton donor/acceptor is the D94. The active-site Schiff-base intermediate with acetaldehyde is K156. K185 serves as the catalytic Proton donor/acceptor.

It belongs to the DeoC/FbaB aldolase family. DeoC type 1 subfamily.

The protein localises to the cytoplasm. It carries out the reaction 2-deoxy-D-ribose 5-phosphate = D-glyceraldehyde 3-phosphate + acetaldehyde. Its pathway is carbohydrate degradation; 2-deoxy-D-ribose 1-phosphate degradation; D-glyceraldehyde 3-phosphate and acetaldehyde from 2-deoxy-alpha-D-ribose 1-phosphate: step 2/2. Catalyzes a reversible aldol reaction between acetaldehyde and D-glyceraldehyde 3-phosphate to generate 2-deoxy-D-ribose 5-phosphate. The polypeptide is Deoxyribose-phosphate aldolase (Burkholderia orbicola (strain MC0-3)).